The chain runs to 121 residues: uncharacterized protein (121 aa).

ATP is bound at residue 77–84 (AALSFGKT).

This is an uncharacterized protein from Saccharomyces cerevisiae (strain ATCC 204508 / S288c) (Baker's yeast).